The chain runs to 798 residues: Neuroligin-1 (798 aa).

Residues 1-17 (MERIYLLLLLFLPRIRS) form the signal peptide. At 18–685 (YDVRSVTTSW…AAGSFTGKAL (668 aa)) the chain is on the extracellular side. Cys-86 and Cys-125 are disulfide-bonded. N-linked (GlcNAc...) asparagine glycans are attached at residues Asn-164, Asn-292, and Asn-315. Cys-288 and Cys-307 are joined by a disulfide. The segment at 636 to 676 (ANLPFPPPPMPPSPPPELTTKPKPSESPTTLQTTTESEKAA) is disordered. The span at 639-652 (PFPPPPMPPSPPPE) shows a compositional bias: pro residues. Over residues 653–665 (LTTKPKPSESPTT) the composition is skewed to low complexity. The helical transmembrane segment at 686-706 (GGVIFIGCGFLIMNVCLLIAV) threads the bilayer. The Cytoplasmic portion of the chain corresponds to 707 to 798 (RREWGKKRRN…QAPTLEEIQV (92 aa)). The disordered stretch occupies residues 731-765 (HGGGAEQYNSLNSPEPLLSASHKNSTSMRPAGISP).

It belongs to the type-B carboxylesterase/lipase family. Interacts (via extracellular domain) with isoform b of madd-4; the interaction is required for the localization to postsynaptic domains. Interacts with unc-49.

It is found in the cell membrane. Its subcellular location is the synapse. In terms of biological role, probable neuronal cell surface protein thought to be involved in cell-cell-interactions by forming intercellular junctions through binding to beta-neurexins. Plays a role in the clustering of the GABA(A) receptor unc-49 at postsynaptic sites in neuromuscular junctions (NMJs) via the interaction with madd-4 and neurexin nrx-1 and is thereby required for normal GABAergic synaptic transmission. The polypeptide is Neuroligin-1 (nlg-1) (Caenorhabditis elegans).